The following is a 139-amino-acid chain: Putative pre-16S rRNA nuclease (139 aa).

It belongs to the YqgF nuclease family.

The protein resides in the cytoplasm. Functionally, could be a nuclease involved in processing of the 5'-end of pre-16S rRNA. The sequence is that of Putative pre-16S rRNA nuclease from Legionella pneumophila (strain Lens).